The following is a 225-amino-acid chain: Biosynthetic peptidoglycan transglycosylase (225 aa).

A helical transmembrane segment spans residues 8-28 (VLLIFIGAILLIQLWIFSSLV).

Belongs to the glycosyltransferase 51 family.

Its subcellular location is the cell inner membrane. The enzyme catalyses [GlcNAc-(1-&gt;4)-Mur2Ac(oyl-L-Ala-gamma-D-Glu-L-Lys-D-Ala-D-Ala)](n)-di-trans,octa-cis-undecaprenyl diphosphate + beta-D-GlcNAc-(1-&gt;4)-Mur2Ac(oyl-L-Ala-gamma-D-Glu-L-Lys-D-Ala-D-Ala)-di-trans,octa-cis-undecaprenyl diphosphate = [GlcNAc-(1-&gt;4)-Mur2Ac(oyl-L-Ala-gamma-D-Glu-L-Lys-D-Ala-D-Ala)](n+1)-di-trans,octa-cis-undecaprenyl diphosphate + di-trans,octa-cis-undecaprenyl diphosphate + H(+). Its pathway is cell wall biogenesis; peptidoglycan biosynthesis. Peptidoglycan polymerase that catalyzes glycan chain elongation from lipid-linked precursors. This is Biosynthetic peptidoglycan transglycosylase from Acinetobacter baumannii (strain AB307-0294).